Here is a 1067-residue protein sequence, read N- to C-terminus: Glycine--tRNA ligase, chloroplastic/mitochondrial 2 (1067 aa).

The transit peptide at 1–50 directs the protein to the chloroplast and mitochondrion; the sequence is MAILHFSLPLIVSFLRPHASPRFFLLPRSLSQSPFLSRRRFHRTSAVSSA. A substrate-binding site is contributed by Glu513. Residues 589-596, 619-624, 744-745, and 859-862 contribute to the ATP site; these read RNSGINIE, LVVPQN, RL, and GLRR. 624–628 serves as a coordination point for substrate; sequence NLLNE. Residue 855 to 859 coordinates substrate; sequence NDPFG.

It belongs to the class-II aminoacyl-tRNA synthetase family. In terms of assembly, homodimer.

It localises to the plastid. The protein localises to the chloroplast. The protein resides in the mitochondrion. The enzyme catalyses tRNA(Gly) + glycine + ATP = glycyl-tRNA(Gly) + AMP + diphosphate. In terms of biological role, catalyzes the attachment of glycine to tRNA(Gly). Is also able produce diadenosine tetraphosphate (Ap4A), a universal pleiotropic signaling molecule needed for cell regulation pathways, by direct condensation of 2 ATPs. The polypeptide is Glycine--tRNA ligase, chloroplastic/mitochondrial 2 (Arabidopsis thaliana (Mouse-ear cress)).